Here is a 340-residue protein sequence, read N- to C-terminus: Formimidoylglutamase (340 aa).

The Mn(2+) site is built by H129, D160, H162, D164, D257, and D259.

The protein belongs to the arginase family. The cofactor is Mn(2+).

It carries out the reaction N-formimidoyl-L-glutamate + H2O = formamide + L-glutamate. Its pathway is amino-acid degradation; L-histidine degradation into L-glutamate; L-glutamate from N-formimidoyl-L-glutamate (hydrolase route): step 1/1. In terms of biological role, catalyzes the conversion of N-formimidoyl-L-glutamate to L-glutamate and formamide. The sequence is that of Formimidoylglutamase from Vibrio parahaemolyticus serotype O3:K6 (strain RIMD 2210633).